We begin with the raw amino-acid sequence, 119 residues long: MKALSPVRGCYEAVCCLSERSLAIARGRGKSPSAEEPLSLLDDMNHCYSRLRELVPGVPRGTQLSQVEILQRVIDYILDLQVVLAEPAPGPPDGPHLPIQTAELTPELVISKDKRSFCH.

Residues 28-80 enclose the bHLH domain; the sequence is RGKSPSAEEPLSLLDDMNHCYSRLRELVPGVPRGTQLSQVEILQRVIDYILDL.

Homodimer, and heterodimer with other HLH proteins. Interacts with COPS5 and COPS7A. Interacts with IFI204. Interacts with GATA4 and NKX2-5. Interacts with ANKRD2; both proteins cooperate in myoblast differentiation. Interacts with CLOCK and BMAL1. Post-translationally, phosphorylated in vitro by CDC2 and PKC.

It is found in the nucleus. Functionally, transcriptional regulator (lacking a basic DNA binding domain) which negatively regulates the basic helix-loop-helix (bHLH) transcription factors by forming heterodimers and inhibiting their DNA binding and transcriptional activity. Implicated in regulating a variety of cellular processes, including cellular growth, senescence, differentiation, apoptosis, angiogenesis, and neoplastic transformation. Involved in myogenesis by inhibiting skeletal muscle and cardiac myocyte differentiation and promoting muscle precursor cells proliferation. Inhibits the binding of E2A-containing protein complexes to muscle creatine kinase E-box enhancer. Regulates the circadian clock by repressing the transcriptional activator activity of the CLOCK-BMAL1 heterodimer. In Rattus norvegicus (Rat), this protein is DNA-binding protein inhibitor ID-3 (Id3).